Here is a 191-residue protein sequence, read N- to C-terminus: ECF RNA polymerase sigma-E factor (191 aa).

The interval 1–153 (MSEQLTDQVL…MAITLRELDG (153 aa)) is binds RNAP core. Residues 25–92 (LVVRYQHKVA…KNYLVAQGRR (68 aa)) are sigma-70 factor domain-2. The Polymerase core binding signature appears at 48–61 (DVVQESFIKAYRAL). Positions 129–180 (QIVFRTIESLPEDLRMAITLRELDGLSYEEIAAIMDCPVGTVRSRIFRAREA) are sigma-70 factor domain-4. The H-T-H motif DNA-binding region spans 156 to 175 (YEEIAAIMDCPVGTVRSRIF).

This sequence belongs to the sigma-70 factor family. ECF subfamily. As to quaternary structure, interacts transiently with the RNAP catalytic core formed by RpoA, RpoB, RpoC and RpoZ (2 alpha, 1 beta, 1 beta' and 1 omega subunit) to form the RNAP holoenzyme that can initiate transcription. Interacts 1:1 with anti-sigma-E factor RseA which prevents binding to RNAP catalytic core.

Its subcellular location is the cytoplasm. ECF sigma-E is held in an inactive form by its cognate anti-sigma factor (RseA) until released by regulated intramembrane proteolysis (RIP). RIP occurs when an extracytoplasmic signal (periplasmic, acid or heat stress) triggers a concerted proteolytic cascade to transmit information and elicit cellular responses. In S.typhimurium there are 2 cascades, the heat shock response which depends on DegS and RseP, and acid response which depends only on RseP. The anti-sigma factor RseA is an inner membrane protein, binding sigma-E in the cytoplasm and RseB in the periplasm. RseA is first cut extracytoplasmically (site-1 protease, S1P, by DegS), then within the membrane itself (site-2 protease, S2P, by RseP), while cytoplasmic proteases (predominantly ClpX-ClpP) finish degrading the regulatory protein, liberating sigma-E. Degradation of RseA requires 2 signals to activate DegS; an outer membrane protein (OMP) signal activates DegS, while an LPS signal causes release of RseB from RseA, freeing RseA to be cleaved. OMP stress can be abrogated by overexpression of the sRNA rybB. Functionally, sigma factors are initiation factors that promote the attachment of RNA polymerase (RNAP) to specific initiation sites and are then released. Extracytoplasmic function (ECF) sigma-E controls the envelope stress response, responding to periplasmic protein stress, increased levels of periplasmic lipopolysaccharide (LPS) as well as acid stress, heat shock and oxidative stress; it controls protein processing in the extracytoplasmic compartment. This is ECF RNA polymerase sigma-E factor (rpoE) from Salmonella typhimurium (strain 14028s / SGSC 2262).